The primary structure comprises 209 residues: Thymidine kinase (209 aa).

Residues 9–16 (SAMNAGKT) and 88–91 (DEAQ) contribute to the ATP site. Glutamate 89 functions as the Proton acceptor in the catalytic mechanism.

Belongs to the thymidine kinase family. In terms of assembly, homotetramer.

It is found in the cytoplasm. The enzyme catalyses thymidine + ATP = dTMP + ADP + H(+). This Xanthomonas oryzae pv. oryzae (strain MAFF 311018) protein is Thymidine kinase.